A 314-amino-acid polypeptide reads, in one-letter code: Acetaldehyde dehydrogenase 1 (314 aa).

An NAD(+)-binding site is contributed by 11–14 (SGNI). Catalysis depends on Cys129, which acts as the Acyl-thioester intermediate. NAD(+)-binding positions include 160–168 (SAGPGTRAN) and Asn292.

Belongs to the acetaldehyde dehydrogenase family.

It carries out the reaction acetaldehyde + NAD(+) + CoA = acetyl-CoA + NADH + H(+). The protein is Acetaldehyde dehydrogenase 1 of Nocardioides sp. (strain ATCC BAA-499 / JS614).